The sequence spans 435 residues: Xylose isomerase (435 aa).

Active-site residues include H99 and D102. 7 residues coordinate Mg(2+): E230, E266, H269, D294, D305, D307, and D337.

It belongs to the xylose isomerase family. Homotetramer. It depends on Mg(2+) as a cofactor.

It is found in the cytoplasm. The catalysed reaction is alpha-D-xylose = alpha-D-xylulofuranose. This Listeria welshimeri serovar 6b (strain ATCC 35897 / DSM 20650 / CCUG 15529 / CIP 8149 / NCTC 11857 / SLCC 5334 / V8) protein is Xylose isomerase.